The sequence spans 215 residues: Probable septum site-determining protein MinC (215 aa).

This sequence belongs to the MinC family. As to quaternary structure, interacts with MinD and FtsZ.

Cell division inhibitor that blocks the formation of polar Z ring septums. Rapidly oscillates between the poles of the cell to destabilize FtsZ filaments that have formed before they mature into polar Z rings. Prevents FtsZ polymerization. The polypeptide is Probable septum site-determining protein MinC (Clostridium botulinum (strain Alaska E43 / Type E3)).